The chain runs to 468 residues: ATP synthase subunit beta (468 aa).

155-162 contributes to the ATP binding site; sequence GGAGVGKT.

It belongs to the ATPase alpha/beta chains family. In terms of assembly, F-type ATPases have 2 components, CF(1) - the catalytic core - and CF(0) - the membrane proton channel. CF(1) has five subunits: alpha(3), beta(3), gamma(1), delta(1), epsilon(1). CF(0) has three main subunits: a(1), b(2) and c(9-12). The alpha and beta chains form an alternating ring which encloses part of the gamma chain. CF(1) is attached to CF(0) by a central stalk formed by the gamma and epsilon chains, while a peripheral stalk is formed by the delta and b chains.

The protein resides in the cell membrane. The enzyme catalyses ATP + H2O + 4 H(+)(in) = ADP + phosphate + 5 H(+)(out). In terms of biological role, produces ATP from ADP in the presence of a proton gradient across the membrane. The catalytic sites are hosted primarily by the beta subunits. In Enterococcus hirae (strain ATCC 9790 / DSM 20160 / JCM 8729 / LMG 6399 / NBRC 3181 / NCIMB 6459 / NCDO 1258 / NCTC 12367 / WDCM 00089 / R), this protein is ATP synthase subunit beta.